Reading from the N-terminus, the 268-residue chain is 3-methyl-2-oxobutanoate hydroxymethyltransferase (268 aa).

Mg(2+)-binding residues include D46 and D85. Residues 46–47 (DS), D85, and K114 contribute to the 3-methyl-2-oxobutanoate site. E116 serves as a coordination point for Mg(2+). The active-site Proton acceptor is the E183.

This sequence belongs to the PanB family. In terms of assembly, homodecamer; pentamer of dimers. Mg(2+) serves as cofactor.

Its subcellular location is the cytoplasm. The enzyme catalyses 3-methyl-2-oxobutanoate + (6R)-5,10-methylene-5,6,7,8-tetrahydrofolate + H2O = 2-dehydropantoate + (6S)-5,6,7,8-tetrahydrofolate. It participates in cofactor biosynthesis; coenzyme A biosynthesis. In terms of biological role, catalyzes the reversible reaction in which hydroxymethyl group from 5,10-methylenetetrahydrofolate is transferred onto alpha-ketoisovalerate to form ketopantoate. The sequence is that of 3-methyl-2-oxobutanoate hydroxymethyltransferase from Sulfolobus acidocaldarius (strain ATCC 33909 / DSM 639 / JCM 8929 / NBRC 15157 / NCIMB 11770).